A 2527-amino-acid polypeptide reads, in one-letter code: Leucine-rich repeat serine/threonine-protein kinase 2 (2527 aa).

The interval 1–969 (MASGACQGCE…RSSRLPSHMR (969 aa)) is required for RAB29-mediated activation. A coiled-coil region spans residues 9–33 (CEEEEEEEALKKLIVRLNNVQEGKQ). Ser910, Ser935, Ser955, and Ser973 each carry phosphoserine. Residues 957-979 (ESLRSSRLPSHMRQSDSSSSLAS) are disordered. Over residues 961–978 (SSRLPSHMRQSDSSSSLA) the composition is skewed to low complexity. 13 LRR repeats span residues 983 to 1004 (HITS…SQKC), 1012 to 1033 (HLTK…LCET), 1036 to 1057 (CLIH…VLKM), 1059 to 1080 (RITN…DPAM), 1084 to 1105 (SLKQ…LAQV), 1108 to 1129 (KLEQ…LSLK), 1130 to 1150 (ELKI…DFLE), 1156 to 1171 (ESFS…MPAL), 1174 to 1196 (SITS…FSLP), 1197 to 1218 (HLRS…AHWK), 1221 to 1245 (NLRE…HVWS), 1246 to 1267 (RVEK…IGCL), and 1269 to 1291 (NLTS…MGKL). Ser1292 is modified (phosphoserine; by autocatalysis). In terms of domain architecture, Roc spans 1328 to 1511 (KAVPYNRMKL…KTIINESLNF (184 aa)). Residue 1341 to 1348 (GNTGSGKT) coordinates GTP. A Phosphoserine modification is found at Ser1444. In terms of domain architecture, COR spans 1543-1740 (TEFPVINRKH…RMYWRQGIYL (198 aa)). A Protein kinase domain is found at 1879–2146 (EAPEFLLGDG…LICLMRHILI (268 aa)). Residues Leu1885, Asp1887, Gly1888, Gly1891, Val1893, Ala1904, Lys1906, Met1947, Glu1948, Ala1950, Ser1954, and Arg1957 each coordinate ATP. Asp1994 acts as the Proton acceptor in catalysis. 4 residues coordinate ATP: His1998, Leu2001, Ala2016, and Asp2017. 2098–2121 (EYGCAPWPMVEKLITKCLKENPQE) serves as a coordination point for GTP. 7 WD repeats span residues 2139-2183 (CLMR…SLFD), 2188-2228 (RYSY…LVIN), 2233-2276 (TKRH…MIFE), 2281-2327 (KCKG…FSFS), 2333-2377 (QKLI…EVWD), 2402-2438 (KESK…LLLD), and 2443-2497 (RVIR…SIWD). 2295–2298 (DVST) is a GTP binding site.

The protein belongs to the protein kinase superfamily. TKL Ser/Thr protein kinase family. In terms of assembly, homodimer. Homotetramer; when activated by GTP-bound RAB29. Interacts with PRKN, PRDX3 and TPCN2. Interacts with VPS35. Interacts (via N-terminus) with RAB29; this interaction is direct and stimulates kinase activity. Interacts (via ROC domain) with SEC16A. Interacts with APP; interaction promotes phosphorylation of 'Thr-743' of APP. Interacts with MAPT. Interacts with RAB8A, RAB10, and RAB12. Interacts (via N-terminus) with RAB32. Interacts with YWHAG; this interaction is dependent on phosphorylation of Ser-910 and either Ser-935 or Ser-1444. Interacts with SFN; this interaction is dependent on phosphorylation of Ser-910 and/or Ser-935. The cofactor is Mg(2+). Autophosphorylated at Ser-1292. Autophosphorylation is stimulated by RAB29. Phosphorylation of Ser-910 and Ser-935 or Ser-1444 facilitates interaction with YWHAG. Phosphorylation of Ser-910 and/or Ser-935 facilitates interaction with SFN. In terms of processing, ubiquitinated by TRIM1; undergoes 'Lys-48'-linked polyubiquitination leading to proteasomal degradation. In terms of tissue distribution, expressed in the brain (at protein level). Detected throughout the adult brain. Expressed in deep cerebral cortex layers, superficial cingulate cortex layers, the piriform cortex, hippocampal formation, caudate putamen, substantia nigra, the basolateral and basomedial anterior amygdala nuclei, reticular thalamic nucleus and also in the cerebellar granular cell layer. Highly expressed in the striatum, cortex and olfactory tubercle. Little or no expression in the substantia nigra, where dopaminergic neurons preferentially degenerate in Parkinson disease. Expression is particularly high in brain dopaminoceptive areas. High and strikingly specific expression in striatum and parts of cortex and no signals in dopamine neurons.

The protein localises to the cytoplasmic vesicle. It localises to the perikaryon. Its subcellular location is the cell projection. The protein resides in the axon. It is found in the dendrite. The protein localises to the golgi apparatus membrane. It localises to the endoplasmic reticulum membrane. Its subcellular location is the secretory vesicle. The protein resides in the synaptic vesicle membrane. It is found in the endosome. The protein localises to the lysosome. It localises to the mitochondrion outer membrane. Its subcellular location is the cytoplasm. The protein resides in the cytoskeleton. It is found in the phagosome. The catalysed reaction is L-threonyl-[protein] + ATP = O-phospho-L-threonyl-[protein] + ADP + H(+). The enzyme catalyses L-seryl-[protein] + ATP = O-phospho-L-seryl-[protein] + ADP + H(+). It carries out the reaction GTP + H2O = GDP + phosphate + H(+). Its activity is regulated as follows. Kinase activity is regulated by the GTPase activity of the ROC domain. GTP-bound LRRK2 kinase activity is stimulated by RAB29. Phosphorylation of RAB10 'Thr-73' is stimulated by RAB29 and RAB32. Inhibited by small molecule inhibitors MLi-2 and LRRK2-IN-1. Its function is as follows. Serine/threonine-protein kinase which phosphorylates a broad range of proteins involved in multiple processes such as neuronal plasticity, innate immunity, autophagy, and vesicle trafficking. Is a key regulator of RAB GTPases by regulating the GTP/GDP exchange and interaction partners of RABs through phosphorylation. Phosphorylates RAB3A, RAB3B, RAB3C, RAB3D, RAB8A, RAB8B, RAB10, RAB12, RAB29, RAB35, and RAB43. Regulates the RAB3IP-catalyzed GDP/GTP exchange for RAB8A through the phosphorylation of 'Thr-72' on RAB8A. Inhibits the interaction between RAB8A and GDI1 and/or GDI2 by phosphorylating 'Thr-72' on RAB8A. Regulates primary ciliogenesis through phosphorylation of RAB8A and RAB10, which promotes SHH signaling in the brain. Together with RAB29, plays a role in the retrograde trafficking pathway for recycling proteins, such as mannose-6-phosphate receptor (M6PR), between lysosomes and the Golgi apparatus in a retromer-dependent manner. Regulates neuronal process morphology in the intact central nervous system (CNS). Plays an important role in recruiting SEC16A to endoplasmic reticulum exit sites (ERES) and in regulating ER to Golgi vesicle-mediated transport and ERES organization. Positively regulates autophagy through a calcium-dependent activation of the CaMKK/AMPK signaling pathway. The process involves activation of nicotinic acid adenine dinucleotide phosphate (NAADP) receptors, increase in lysosomal pH, and calcium release from lysosomes. Phosphorylates PRDX3. By phosphorylating APP on 'Thr-743', which promotes the production and the nuclear translocation of the APP intracellular domain (AICD), regulates dopaminergic neuron apoptosis. Acts as a positive regulator of innate immunity by mediating phosphorylation of RIPK2 downstream of NOD1 and NOD2, thereby enhancing RIPK2 activation. Independent of its kinase activity, inhibits the proteasomal degradation of MAPT, thus promoting MAPT oligomerization and secretion. In addition, has GTPase activity via its Roc domain which regulates LRKK2 kinase activity. Recruited by RAB29/RAB7L1 to overloaded lysosomes where it phosphorylates and stabilizes RAB8A and RAB10 which promote lysosomal content release and suppress lysosomal enlargement through the EHBP1 and EHBP1L1 effector proteins. The chain is Leucine-rich repeat serine/threonine-protein kinase 2 (Lrrk2) from Mus musculus (Mouse).